A 463-amino-acid polypeptide reads, in one-letter code: Phytase A (463 aa).

Positions 1–19 are cleaved as a signal peptide; sequence MAFFTVALSLYYLLSRVST. Asn26 is a glycosylation site (N-linked (GlcNAc...) asparagine). A disulfide bridge links Cys29 with Cys38. N-linked (GlcNAc...) asparagine glycosylation is present at Asn41. Residues Gln48, Tyr49, Arg79, His80, Arg83, and Thr86 each contribute to the 1D-myo-inositol hexakisphosphate site. 4 disulfide bridges follow: Cys69-Cys410, Cys211-Cys460, Cys260-Cys278, and Cys431-Cys439. The active-site Nucleophile is His80. Asn103 and Asn118 each carry an N-linked (GlcNAc...) asparagine glycan. Arg163 provides a ligand contact to 1D-myo-inositol hexakisphosphate. N-linked (GlcNAc...) asparagine glycosylation is present at Asn203. 1D-myo-inositol hexakisphosphate is bound at residue Asp207. N-linked (GlcNAc...) asparagine glycosylation occurs at Asn226. Lys297 provides a ligand contact to 1D-myo-inositol hexakisphosphate. 2 N-linked (GlcNAc...) asparagine glycosylation sites follow: Asn331 and Asn335. 1D-myo-inositol hexakisphosphate is bound by residues His357 and Asp358. A glycan (N-linked (GlcNAc...) asparagine) is linked at Asn372.

It belongs to the histidine acid phosphatase family. In terms of assembly, monomer. Seems to be cleaved into at least two pieces, most likely due to proteases in the supernatant. The N-terminal fragment, called phyB seems to retain phytase activity.

Its subcellular location is the secreted. The enzyme catalyses 1D-myo-inositol hexakisphosphate + H2O = 1D-myo-inositol 1,2,4,5,6-pentakisphosphate + phosphate. It carries out the reaction 1D-myo-inositol 1,2,4,5,6-pentakisphosphate + H2O = 1D-myo-inositol 1,2,5,6-tetrakisphosphate + phosphate. It catalyses the reaction 1D-myo-inositol 1,2,5,6-tetrakisphosphate + H2O = 1D-myo-inositol 1,2,6-trisphosphate + phosphate. The catalysed reaction is 1D-myo-inositol 1,2,6-trisphosphate + H2O = 1D-myo-inositol 1,2-bisphosphate + phosphate. The enzyme catalyses 1D-myo-inositol 1,2-bisphosphate + H2O = 1D-myo-inositol 2-phosphate + phosphate. Catalyzes the phosphate monoester hydrolysis of phytic acid (myo-inositol hexakisphosphate), which results in the stepwise formation of myo-inositol pentakis-, tetrakis-, tris-, bis-, and monophosphates, as well as the liberation of inorganic phosphate. Myo-inositol 2-monophosphate is the end product. Has a broad substrate specificity and is also able to dephosphorylate other classic acid phosphatase substrates such as p-nitrophenyl phosphate, phenyl phosphate, fructose 1,6-bisphosphate, fructose 6-phosphate, glucose 6-phosphate, ribose 5-phosphate, alpha-glycerophosphate, beta-glycerophosphate, 3-phosphoglycerate, as well as ADP and ATP. This chain is Phytase A, found in Emericella nidulans (strain FGSC A4 / ATCC 38163 / CBS 112.46 / NRRL 194 / M139) (Aspergillus nidulans).